The sequence spans 215 residues: Probable transaldolase (215 aa).

K83 serves as the catalytic Schiff-base intermediate with substrate.

Belongs to the transaldolase family. Type 3B subfamily.

The protein localises to the cytoplasm. The enzyme catalyses D-sedoheptulose 7-phosphate + D-glyceraldehyde 3-phosphate = D-erythrose 4-phosphate + beta-D-fructose 6-phosphate. It participates in carbohydrate degradation; pentose phosphate pathway; D-glyceraldehyde 3-phosphate and beta-D-fructose 6-phosphate from D-ribose 5-phosphate and D-xylulose 5-phosphate (non-oxidative stage): step 2/3. Functionally, transaldolase is important for the balance of metabolites in the pentose-phosphate pathway. The protein is Probable transaldolase of Methanococcus maripaludis (strain C6 / ATCC BAA-1332).